A 750-amino-acid chain; its full sequence is Eukaryotic translation initiation factor 3 subunit B (750 aa).

An RRM domain is found at T42–D128. WD repeat units follow at residues D195–R234, P236–S292, S309–K348, and L519–E562.

Belongs to the eIF-3 subunit B family. As to quaternary structure, component of the eukaryotic translation initiation factor 3 (eIF-3) complex.

It localises to the cytoplasm. In terms of biological role, RNA-binding component of the eukaryotic translation initiation factor 3 (eIF-3) complex, which is involved in protein synthesis of a specialized repertoire of mRNAs and, together with other initiation factors, stimulates binding of mRNA and methionyl-tRNAi to the 40S ribosome. The eIF-3 complex specifically targets and initiates translation of a subset of mRNAs involved in cell proliferation. This is Eukaryotic translation initiation factor 3 subunit B from Chaetomium globosum (strain ATCC 6205 / CBS 148.51 / DSM 1962 / NBRC 6347 / NRRL 1970) (Soil fungus).